Reading from the N-terminus, the 362-residue chain is Lipoprotein p35 (362 aa).

Positions 1–30 are cleaved as a signal peptide; it reads MKIKKIKLLKALALTGAFGIVATVPVIVSS. A lipid anchor (N-palmitoyl cysteine) is attached at Cys-31. Residue Cys-31 is the site of S-diacylglycerol cysteine attachment. A disordered region spans residues 33-53; the sequence is STSENNGNGNGNGGTDGNTQQ.

This sequence belongs to the p35 lipoprotein family. In terms of processing, the N-terminus is blocked.

It is found in the cell membrane. Major M.penetrans antigen. The chain is Lipoprotein p35 from Malacoplasma penetrans (strain HF-2) (Mycoplasma penetrans).